Reading from the N-terminus, the 598-residue chain is Cytochrome P450 monooxygenase phmB (598 aa).

A helical membrane pass occupies residues 107-127 (VAAKIAALLFVAGLFWAVSVL). N-linked (GlcNAc...) asparagine glycosylation is found at asparagine 171, asparagine 428, and asparagine 494. Cysteine 542 provides a ligand contact to heme. Residues asparagine 549 and asparagine 581 are each glycosylated (N-linked (GlcNAc...) asparagine).

This sequence belongs to the cytochrome P450 family. Requires heme as cofactor.

The protein localises to the membrane. Its pathway is mycotoxin biosynthesis. Cytochrome P450 monooxygenase; part of the gene cluster that mediates the biosynthesis of the mycotoxins phomacins, leucine-derived cytochalasans with potent actin polymerization-inhibitory activities and monocot-specific antigerminative activities. The first step in the pathway is catalyzed by the hybrid PKS-NRPS phmA, assisted by the enoyl reductase phmE, that are responsible for fusion of the leucine precursor and the polyketide backbone to produce a 2-pyrrolidone intermediate. The polyketide synthase module (PKS) of phmA is responsible for the synthesis of the polyketide backbone and the downstream nonribosomal peptide synthetase (NRPS) amidates the carboxyl end of the polyketide with the leucine precursor. Because phmA lacks a designated enoylreductase (ER) domain, the required activity is provided the enoyl reductase phmE. Reduction by the hydrolyase phmG, followed by dehydration and intra-molecular Diels-Alder cyclization by the Diels-Alderase phmD then yield the required isoindolone-fused macrocycle. A number of oxidative steps catalyzed by the tailoring cytochrome P450 monooxygenase phmB, the FAD-linked oxidoreductase phmC and the short-chain dehydrogenase/reductase phmF, are further required to afford the final products, phomacin D and phomacin E. In Phaeosphaeria nodorum (strain SN15 / ATCC MYA-4574 / FGSC 10173) (Glume blotch fungus), this protein is Cytochrome P450 monooxygenase phmB.